The chain runs to 137 residues: MVASSINEESSLAVNLTSDVEKASKTLFKAFEKSYANDYLMKKFFHIPITEKVSRARINAMIHYYTTCYHDLDGEIAEANDFDAVAIWSRPGCHLPATLSDDESFNKIFFSRLDCEEARSHASGNGLLLPLCHRKRS.

This is an uncharacterized protein from Saccharomyces cerevisiae (strain ATCC 204508 / S288c) (Baker's yeast).